A 762-amino-acid polypeptide reads, in one-letter code: N,N-dimethylformamidase beta subunit (762 aa).

In terms of assembly, heterotetramer of two DmfA1 (alpha) and two DmfA2 (beta) subunits.

It catalyses the reaction N,N-dimethylformamide + H2O = dimethylamine + formate. Its activity is regulated as follows. Activity is slightly inhibited by Mg(2+) and Mn(2+), and slightly increased by Cu(2+). Activity is slightly inhibited by the chelating agents 8-hydroxyquinoline, ethylenediaminetetraacetate, o-phenanthroline and 2,2'-bipyridyl. Its function is as follows. Hydrolyzes N,N-dimethylformamide, and to a lesser extent N,N-dimethylacetamide and N,N-diethylacetamide. Has no activity against the substituted amides N-methylformamide, N-ethylformamide, N-ethylformamide and N-methylacetamide or the unsubstituted amides formamide, nicotinamide, acetoamide, benzamide, acetamide and acrylamide. The protein is N,N-dimethylformamidase beta subunit of Alcaligenes sp.